A 496-amino-acid chain; its full sequence is UDP-N-acetylmuramoyl-L-alanyl-D-glutamate--2,6-diaminopimelate ligase (496 aa).

The UDP-N-acetyl-alpha-D-muramoyl-L-alanyl-D-glutamate site is built by Leu24 and Ser26. 109–115 is a binding site for ATP; sequence GTNGKTS. UDP-N-acetyl-alpha-D-muramoyl-L-alanyl-D-glutamate contacts are provided by residues 151–152, Ser178, Gln184, and Arg186; that span reads TT. An N6-carboxylysine modification is found at Lys218. Residues Arg387, 411 to 414, Gly462, and Glu466 contribute to the meso-2,6-diaminopimelate site; that span reads DNPR. The short motif at 411–414 is the Meso-diaminopimelate recognition motif element; it reads DNPR.

It belongs to the MurCDEF family. MurE subfamily. Mg(2+) is required as a cofactor. In terms of processing, carboxylation is probably crucial for Mg(2+) binding and, consequently, for the gamma-phosphate positioning of ATP.

Its subcellular location is the cytoplasm. It carries out the reaction UDP-N-acetyl-alpha-D-muramoyl-L-alanyl-D-glutamate + meso-2,6-diaminopimelate + ATP = UDP-N-acetyl-alpha-D-muramoyl-L-alanyl-gamma-D-glutamyl-meso-2,6-diaminopimelate + ADP + phosphate + H(+). It participates in cell wall biogenesis; peptidoglycan biosynthesis. In terms of biological role, catalyzes the addition of meso-diaminopimelic acid to the nucleotide precursor UDP-N-acetylmuramoyl-L-alanyl-D-glutamate (UMAG) in the biosynthesis of bacterial cell-wall peptidoglycan. This Pseudomonas putida (strain ATCC 47054 / DSM 6125 / CFBP 8728 / NCIMB 11950 / KT2440) protein is UDP-N-acetylmuramoyl-L-alanyl-D-glutamate--2,6-diaminopimelate ligase.